The sequence spans 265 residues: Endochitinase At2g43580 (265 aa).

Positions 1–24 (MALTKIFLILLLSLLGLYSETVKS) are cleaved as a signal peptide. A Chitin-binding type-1 domain is found at 25-59 (QNCDCAPNLCCSQFGYCGTTADYCGSTCQSGPCRV). Disulfide bonds link Cys-27–Cys-35, Cys-29–Cys-41, Cys-34–Cys-48, and Cys-52–Cys-57. The catalytic stretch occupies residues 67–265 (GLVGNIVTQI…GLDPGANITC (199 aa)). A glycan (N-linked (GlcNAc...) asparagine) is linked at Asn-102. The active-site Proton donor is Glu-129. A glycan (N-linked (GlcNAc...) asparagine) is linked at Asn-262.

Belongs to the glycosyl hydrolase 19 family. Chitinase class I subfamily.

It carries out the reaction Random endo-hydrolysis of N-acetyl-beta-D-glucosaminide (1-&gt;4)-beta-linkages in chitin and chitodextrins.. The chain is Endochitinase At2g43580 from Arabidopsis thaliana (Mouse-ear cress).